Here is a 287-residue protein sequence, read N- to C-terminus: 4-hydroxybenzoate octaprenyltransferase (287 aa).

6 helical membrane-spanning segments follow: residues 23 to 40 (IGSLLLLWPTLWALWLAG), 98 to 118 (ILFVVLVLLAFGLVLTLNKMT), 141 to 161 (LPQFVLGAAFGWSIPMAYAAV), 163 to 183 (ESLPATCWMMFLAYICWTVAY), 213 to 233 (IIIGLLQFSMLALLLALGNIT), and 235 to 255 (LGIPYTISLLVAAGMFIYQQI).

It belongs to the UbiA prenyltransferase family. It depends on Mg(2+) as a cofactor.

The protein localises to the cell inner membrane. It catalyses the reaction all-trans-octaprenyl diphosphate + 4-hydroxybenzoate = 4-hydroxy-3-(all-trans-octaprenyl)benzoate + diphosphate. It functions in the pathway cofactor biosynthesis; ubiquinone biosynthesis. Its function is as follows. Catalyzes the prenylation of para-hydroxybenzoate (PHB) with an all-trans polyprenyl group. Mediates the second step in the final reaction sequence of ubiquinone-8 (UQ-8) biosynthesis, which is the condensation of the polyisoprenoid side chain with PHB, generating the first membrane-bound Q intermediate 3-octaprenyl-4-hydroxybenzoate. In Pectobacterium atrosepticum (strain SCRI 1043 / ATCC BAA-672) (Erwinia carotovora subsp. atroseptica), this protein is 4-hydroxybenzoate octaprenyltransferase.